The sequence spans 258 residues: Probable dihydroorotate dehydrogenase B (NAD(+)), electron transfer subunit (258 aa).

Residues methionine 1–isoleucine 90 enclose the FAD-binding FR-type domain. [2Fe-2S] cluster is bound by residues cysteine 210, cysteine 215, cysteine 218, and cysteine 228.

This sequence belongs to the PyrK family. Heterotetramer of 2 PyrK and 2 PyrD type B subunits. [2Fe-2S] cluster is required as a cofactor. Requires FAD as cofactor.

The protein operates within pyrimidine metabolism; UMP biosynthesis via de novo pathway; orotate from (S)-dihydroorotate (NAD(+) route): step 1/1. Responsible for channeling the electrons from the oxidation of dihydroorotate from the FMN redox center in the PyrD type B subunit to the ultimate electron acceptor NAD(+). This Methanocella arvoryzae (strain DSM 22066 / NBRC 105507 / MRE50) protein is Probable dihydroorotate dehydrogenase B (NAD(+)), electron transfer subunit.